The primary structure comprises 273 residues: Cytosolic sulfotransferase 4 (273 aa).

74 to 79 (KCGTTW) contacts 3'-phosphoadenylyl sulfate. The active-site Proton acceptor is the H121. 3'-phosphoadenylyl sulfate contacts are provided by residues R143 and 239–241 (RKG).

Belongs to the sulfotransferase 1 family.

It localises to the cytoplasm. Its function is as follows. Sulfotransferase that utilizes 3'-phospho-5'-adenylyl sulfate (PAPS) as sulfonate donor. This chain is Cytosolic sulfotransferase 4 (SOT4), found in Arabidopsis thaliana (Mouse-ear cress).